The sequence spans 800 residues: Putative antiporter subunit mnhA2 (800 aa).

The next 21 helical transmembrane spans lie at 1–21, 29–49, 78–98, 109–129, 133–153, 167–187, 209–229, 241–261, 272–292, 300–320, 336–356, 387–407, 424–444, 472–492, 528–548, 595–615, 627–647, 651–671, 676–696, 712–732, and 768–788; these read MSLVYLMATNLLFMLIVLFTL, VAGYVALIAPIVTSTYFIMKI, GLSLMFGLIISLIGVGVFFYA, LPRFFIYLLLFMFSMIGIVIA, ILMYVFWELTSISSFLLISYW, FMITVFGGLALLTGFIILYII, FIPMILMLLLGAFTKSAQFPF, TPVSAYLHSATMVKAGIFLLF, VYIYTVTFVGLITMLFGSLTA, GILAYSTISQLGMIMTMVGLG, ILVLFAGLFHLMNHAVFKCAL, IVMLLAALSMAGVPFLNGFLS, YGFVLTFVIISIGVIASILTF, PWLFSLPAVILMLLIPVIFFV, VNLPLILSIVVIIIGLILALV, IMITLFIFVAIVVYGYLTVGF, GPLEVILSVVTLIIGISLIFI, LTMVVLNGMIGFAVTLYFIAM, LALTQLVVETITTILFIVSFS, TFKIIVSLVMALTVVSLIFVA, and LDTMFEGLVLIIAGLGIYTLL.

This sequence belongs to the CPA3 antiporters (TC 2.A.63) subunit A family. As to quaternary structure, may form a heterooligomeric complex that consists of seven subunits: mnhA2, mnhB2, mnhC2, mnhD2, mnhE2, mnhF2 and mnhG2.

Its subcellular location is the cell membrane. In Staphylococcus epidermidis (strain ATCC 12228 / FDA PCI 1200), this protein is Putative antiporter subunit mnhA2 (mnhA2).